A 189-amino-acid polypeptide reads, in one-letter code: Probable hydrogen peroxide-inducible genes activator (189 aa).

The HTH lysR-type domain occupies 8 to 65 (PTLAGLRAFAAVAEKQHFGSAASALGVNQSTLSQALAGLESGLGVRLIERSTRRVFLT). Positions 25–44 (FGSAASALGVNQSTLSQALA) form a DNA-binding region, H-T-H motif.

The protein belongs to the LysR transcriptional regulatory family.

Its function is as follows. Required for the induction the katG gene for catalase. Involved in the response to hydrogen peroxide. This chain is Probable hydrogen peroxide-inducible genes activator (oxyR), found in Mycobacterium xenopi.